The primary structure comprises 340 residues: 4-dimethylallyltryptophan N-methyltransferase easF (340 aa).

It belongs to the methyltransferase superfamily. As to quaternary structure, homodimer.

It carries out the reaction 4-(3-methylbut-2-enyl)-L-tryptophan + S-adenosyl-L-methionine = 4-(3-methylbut-2-enyl)-L-abrine + S-adenosyl-L-homocysteine + H(+). It participates in alkaloid biosynthesis; ergot alkaloid biosynthesis. Its function is as follows. 4-dimethylallyltryptophan N-methyltransferase; part of the gene cluster that mediates the biosynthesis of fungal ergot alkaloid. DmaW catalyzes the first step of ergot alkaloid biosynthesis by condensing dimethylallyl diphosphate (DMAP) and tryptophan to form 4-dimethylallyl-L-tryptophan. The second step is catalyzed by the methyltransferase easF that methylates 4-dimethylallyl-L-tryptophan in the presence of S-adenosyl-L-methionine, resulting in the formation of 4-dimethylallyl-L-abrine. The catalase easC and the FAD-dependent oxidoreductase easE then transform 4-dimethylallyl-L-abrine to chanoclavine-I which is further oxidized by easD in the presence of NAD(+), resulting in the formation of chanoclavine-I aldehyde. Chanoclavine-I aldehyde is the precursor of ergoamides and ergopeptines in Clavicipitaceae, and clavine-type alcaloids such as fumiclavine in Trichocomaceae. However, the metabolites downstream of chanoclavine-I aldehyde in Arthrodermataceae have not been identified yet. This is 4-dimethylallyltryptophan N-methyltransferase easF from Trichophyton verrucosum (strain HKI 0517).